We begin with the raw amino-acid sequence, 304 residues long: Voltage-dependent anion channel-forming protein YneE (304 aa).

A run of 4 helical transmembrane segments spans residues 28–48 (LLLNFLFSIAVIFMLPWYTHL), 50–70 (IKFTLAPFSILGVAIAIFLGF), 194–214 (VLAGCERIAYTPIPFAYTLIL), and 220–240 (LFCIMLPFALVVDLHYMTPFI).

The protein belongs to the anion channel-forming bestrophin (TC 1.A.46) family.

Its subcellular location is the cell membrane. The protein is Voltage-dependent anion channel-forming protein YneE (yneE) of Escherichia coli (strain K12).